The chain runs to 303 residues: Acetylglutamate kinase (303 aa).

Residues Gly69 to Gly70, Arg91, and Asn190 contribute to the substrate site.

This sequence belongs to the acetylglutamate kinase family. ArgB subfamily.

Its subcellular location is the cytoplasm. The enzyme catalyses N-acetyl-L-glutamate + ATP = N-acetyl-L-glutamyl 5-phosphate + ADP. Its pathway is amino-acid biosynthesis; L-arginine biosynthesis; N(2)-acetyl-L-ornithine from L-glutamate: step 2/4. Catalyzes the ATP-dependent phosphorylation of N-acetyl-L-glutamate. In Nocardia farcinica (strain IFM 10152), this protein is Acetylglutamate kinase.